Consider the following 368-residue polypeptide: Core-capsid bridging protein (368 aa).

Disordered stretches follow at residues 17 to 49 and 307 to 340; these read EIYG…DELD and GYRG…QPVL. The segment covering 22-31 has biased composition (basic and acidic residues); it reads PKKEEQDYKP. Basic residues-rich tracts occupy residues 32-41 and 314-337; these read RKLKRVKKKK and RPRR…RRRQ.

Belongs to the adenoviridae core-capsid bridging protein family. In terms of assembly, monomer. Homodimer. Exists in equilibrium between monomers and dimers in solution. Interacts with the histone-like nucleoprotein; this interactions bridge the virus core to the capsid. Interacts with core protein X; this interactions bridge the virus core to the capsid. Interacts with the endosome lysis protein VI; this interactions bridge the virus core to the capsid. Interacts with the peripentonal hexons. Interacts with host NPM1; this interaction might play a role in virus assembly. In terms of processing, during virion entry, is ubiquitinated at the nuclear pore complex by host MIB1. This dissociates viral genomic DNA from capsid and allows genome delivery into nucleus for infection.

Its subcellular location is the virion. The protein resides in the host nucleus. It is found in the host nucleolus. Associates loosely with the viral DNA to form an outer shell around the nucleoprotein-DNA complex and links it with the capsid by binding the endosome lysis protein. During entry, secures the viral genome in the capsid until it reaches the nuclear pore complex, preventing innate immunity responses. Dissociates from the viral genome at nuclear pore. Might be involved in nuclear capsid assembly of the viral particles through its association with NPM1/nucleophosmin. The chain is Core-capsid bridging protein from Human adenovirus C serotype 5 (HAdV-5).